The following is a 599-amino-acid chain: Sodium-dependent phosphate transport protein 2C (599 aa).

Topologically, residues 1–76 (MPSSLPGSQV…RRVAGSVLKA (76 aa)) are cytoplasmic. Residue S4 is modified to Phosphoserine. Residues 77 to 97 (CGLLGSLYFFICSLDVLSSAF) traverse the membrane as a helical segment. At 98–111 (QLLGSKVAGDIFKD) the chain is on the extracellular side. A helical membrane pass occupies residues 112–132 (NVVLSNPVAGLVIGVLVTALV). Residues 133–188 (QSSSTSSSIVVSMVAAKLLTVRVSVPIIMGVNVGTSITSTLVSMAQSGDRDEFQRA) are Cytoplasmic-facing. Residues 189-209 (FSGSAVHGIFNWLTVLVLLPL) traverse the membrane as a helical segment. Residues 210–322 (ESATALLERL…FAGTELTDLA (113 aa)) are Extracellular-facing. N265, N268, N286, and N299 each carry an N-linked (GlcNAc...) asparagine glycan. C276 and C309 are oxidised to a cystine. A helical membrane pass occupies residues 323 to 343 (VGCILLAGSLLVLCGCLVLIV). The Cytoplasmic portion of the chain corresponds to 344-367 (KLLNSVLRGRVAQVVRTVINADFP). Residues 368-388 (FPLGWLGGYLAVLAGAGLTFA) form a helical membrane-spanning segment. Residues 389-445 (LQSSSVFTAAVVPLMGVGVISLDRAYPLLLGSNIGTTTTALLAALASPADRMLSALQ) are Extracellular-facing. The chain crosses the membrane as a helical span at residues 446–466 (VALIHFFFNLAGILLWYLVPA). Topologically, residues 467 to 485 (LRLPIPLARHFGVVTARYR) are cytoplasmic. The chain crosses the membrane as a helical span at residues 486–506 (WVAGVYLLLGFLLLPLAAFGL). The Extracellular portion of the chain corresponds to 507-510 (SLAG). The helical transmembrane segment at 511 to 531 (GMELAAVGGPLVGLVLLVILV) threads the bilayer. Residues 532-599 (TVLQRRRPAW…NPEILASQQL (68 aa)) are Cytoplasmic-facing.

Belongs to the SLC34A transporter family. As to expression, expressed only in the kidney.

The protein resides in the apical cell membrane. The enzyme catalyses 2 Na(+)(out) + phosphate(out) = 2 Na(+)(in) + phosphate(in). Functionally, involved in actively transporting phosphate into cells via Na(+) cotransport in the renal brush border membrane. The cotransport has a Na(+):Pi stoichiometry of 2:1 and is electroneutral. The protein is Sodium-dependent phosphate transport protein 2C (SLC34A3) of Homo sapiens (Human).